The chain runs to 574 residues: E3 ubiquitin-protein ligase TRIM23 (574 aa).

Residues 31-76 (CGVCEDVFSLQGDKVPRLLLCGHTVCHDCLTRLPLHGRAIRCPFDR) form an RING-type; degenerate zinc finger. Residues 122–168 (ESIIRCDEDEAHLASVYCTVCATHLCSECSQVTHSTKTLAKHRRVPL) form a B box-type; degenerate zinc finger. Positions 352–379 (RVVLAKQEITRLLETLQKQQQQFTEVAD) form a coiled coil. An ARF-like region spans residues 390–574 (TFTKDNRVHI…LVAAGVLDVA (185 aa)). GTP is bound by residues 411–418 (GLDGAGKT), 454–458 (DVGGK), and 513–516 (NKQD).

It in the C-terminal section; belongs to the small GTPase superfamily. Arf family. Homodimer. Interacts with PSCD1. Interacts with UBE2D2. Interacts with TBK1 (via N-terminal kinase domain) and p62/SQSTM1. In terms of assembly, (Microbial infection) Interacts with human cytomegalovirus protein UL144; this interaction might cause autoubiquitination of TRAF6, leading to NF-kappa-B activation.

It localises to the cytoplasm. It is found in the endomembrane system. The protein localises to the golgi apparatus membrane. Its subcellular location is the lysosome membrane. The enzyme catalyses S-ubiquitinyl-[E2 ubiquitin-conjugating enzyme]-L-cysteine + [acceptor protein]-L-lysine = [E2 ubiquitin-conjugating enzyme]-L-cysteine + N(6)-ubiquitinyl-[acceptor protein]-L-lysine.. It functions in the pathway protein modification; protein ubiquitination. Functionally, acts as an E3 ubiquitin-protein ligase. Plays an essential role in autophagy activation during viral infection. Mechanistically, activates TANK-binding kinase 1/TBK1 by facilitating its dimerization and ability to phosphorylate the selective autophagy receptor SQSTM1. In order to achieve this function, TRIM23 mediates 'Lys-27'-linked auto-ubiquitination of its ADP-ribosylation factor (ARF) domain to induce its GTPase activity and its recruitment to autophagosomes. (Microbial infection) Mediates TRAF6 auto-ubiquitination in the presence of human cytomegalovirus protein UL144, resulting in the virally controlled activation of NF-kappa-B stimulation at early times of HCMV infection. The protein is E3 ubiquitin-protein ligase TRIM23 (TRIM23) of Homo sapiens (Human).